We begin with the raw amino-acid sequence, 288 residues long: ATP synthase gamma chain (288 aa).

The protein belongs to the ATPase gamma chain family. F-type ATPases have 2 components, CF(1) - the catalytic core - and CF(0) - the membrane proton channel. CF(1) has five subunits: alpha(3), beta(3), gamma(1), delta(1), epsilon(1). CF(0) has three main subunits: a, b and c.

It is found in the cell inner membrane. In terms of biological role, produces ATP from ADP in the presence of a proton gradient across the membrane. The gamma chain is believed to be important in regulating ATPase activity and the flow of protons through the CF(0) complex. The sequence is that of ATP synthase gamma chain from Polaromonas naphthalenivorans (strain CJ2).